Consider the following 278-residue polypeptide: Biotin synthase (278 aa).

Residues 1–227 (MQIMLCAISN…QSVVMVAGGR (227 aa)) enclose the Radical SAM core domain. Cys-16, Cys-20, and Cys-23 together coordinate [4Fe-4S] cluster. 3 residues coordinate [2Fe-2S] cluster: Cys-60, Cys-95, and Cys-153.

Belongs to the radical SAM superfamily. Biotin synthase family. In terms of assembly, homodimer. It depends on [4Fe-4S] cluster as a cofactor. [2Fe-2S] cluster serves as cofactor.

It catalyses the reaction (4R,5S)-dethiobiotin + (sulfur carrier)-SH + 2 reduced [2Fe-2S]-[ferredoxin] + 2 S-adenosyl-L-methionine = (sulfur carrier)-H + biotin + 2 5'-deoxyadenosine + 2 L-methionine + 2 oxidized [2Fe-2S]-[ferredoxin]. Its pathway is cofactor biosynthesis; biotin biosynthesis; biotin from 7,8-diaminononanoate: step 2/2. Its function is as follows. Catalyzes the conversion of dethiobiotin (DTB) to biotin by the insertion of a sulfur atom into dethiobiotin via a radical-based mechanism. In Campylobacter jejuni subsp. jejuni serotype O:23/36 (strain 81-176), this protein is Biotin synthase.